The following is a 154-amino-acid chain: Putative pre-16S rRNA nuclease (154 aa).

The protein belongs to the YqgF nuclease family.

It localises to the cytoplasm. Its function is as follows. Could be a nuclease involved in processing of the 5'-end of pre-16S rRNA. This is Putative pre-16S rRNA nuclease from Ruegeria pomeroyi (strain ATCC 700808 / DSM 15171 / DSS-3) (Silicibacter pomeroyi).